Consider the following 84-residue polypeptide: Sec-independent protein translocase protein TatA (84 aa).

Residues methionine 1–glycine 21 traverse the membrane as a helical segment. Residues lysine 40–serine 84 form a disordered region. Residues aspartate 69 to serine 84 show a composition bias toward basic and acidic residues.

It belongs to the TatA/E family. In terms of assembly, the Tat system comprises two distinct complexes: a TatABC complex, containing multiple copies of TatA, TatB and TatC subunits, and a separate TatA complex, containing only TatA subunits. Substrates initially bind to the TatABC complex, which probably triggers association of the separate TatA complex to form the active translocon.

Its subcellular location is the cell inner membrane. Part of the twin-arginine translocation (Tat) system that transports large folded proteins containing a characteristic twin-arginine motif in their signal peptide across membranes. TatA could form the protein-conducting channel of the Tat system. This chain is Sec-independent protein translocase protein TatA, found in Polaromonas naphthalenivorans (strain CJ2).